Reading from the N-terminus, the 121-residue chain is Large ribosomal subunit protein bL20 (121 aa).

The protein belongs to the bacterial ribosomal protein bL20 family.

In terms of biological role, binds directly to 23S ribosomal RNA and is necessary for the in vitro assembly process of the 50S ribosomal subunit. It is not involved in the protein synthesizing functions of that subunit. In Methylorubrum extorquens (strain PA1) (Methylobacterium extorquens), this protein is Large ribosomal subunit protein bL20.